A 326-amino-acid chain; its full sequence is Protein phosphatase 1 regulatory subunit SDS22 homolog (326 aa).

The interval 1–22 is disordered; sequence MSNDKSAEVVVLPRENDEESKE. LRR repeat units lie at residues 35–57, 58–80, 81–102, 103–126, 128–146, 147–170, 172–190, 191–212, 213–236, 238–256, 257–280, and 281–304; these read DIDS…LTGF, PKIE…ISSL, VTLT…LESL, VNLV…KLTK, ETLY…LEAL, TQLK…HLVN, DELF…VETL, QKLS…VEQL, NNLK…PLTN, LLLD…VERL, ESLN…QLSK, and LKGL…QYRR.

Belongs to the SDS22 family.

It localises to the nucleus. Its function is as follows. Regulatory subunit of protein phosphatase 1. This is Protein phosphatase 1 regulatory subunit SDS22 homolog (sds-22) from Caenorhabditis elegans.